We begin with the raw amino-acid sequence, 78 residues long: Biotin synthase auxiliary protein (78 aa).

It belongs to the BsaP family. Iron-sulfur cluster serves as cofactor.

Functionally, required for the activity of the biotin synthase BioB. In Mycolicibacterium smegmatis (strain ATCC 700084 / mc(2)155) (Mycobacterium smegmatis), this protein is Biotin synthase auxiliary protein.